A 523-amino-acid polypeptide reads, in one-letter code: Cyclic di-GMP binding protein BcsE (523 aa).

Belongs to the BcsE family.

In terms of biological role, required for cellulose biosynthesis. May have protease activity, but BcsA is not targeted. Binds bis-(3'-5') cyclic diguanylic acid (c-di-GMP). In Salmonella typhimurium (strain LT2 / SGSC1412 / ATCC 700720), this protein is Cyclic di-GMP binding protein BcsE.